The chain runs to 66 residues: Metallothionein (66 aa).

S1 bears the N-acetylserine mark. 18 residues coordinate Cd(2+): C9, C13, C18, C20, C24, C26, C30, C32, C35, C38, C40, C45, C47, C51, C57, C59, C63, and C65.

Belongs to the metallothionein superfamily. Type 2 family.

Functionally, the metallothioneins are involved in the cellular sequestration of toxic metal ions and regulation of essential trace elements. The sequence is that of Metallothionein from Arianta arbustorum (Land snail).